Reading from the N-terminus, the 287-residue chain is UBX domain-containing protein 1 (287 aa).

The UBA domain maps to 1–42 (MAECSTLESLIEMGFSPSRAEKALAATGNQGIEPAMDWLVEH). Residues 44-207 (DDPDIDEPSV…VQEPPTKKEY (164 aa)) form a disordered region. 2 stretches are compositionally biased toward basic and acidic residues: residues 72–114 (CEER…EQEK) and 129–169 (KIQE…ERAR). Positions 72 to 164 (CEERLPLTEE…RVREKIARDK (93 aa)) form a coiled coil. Over residues 176–197 (SEPISPPAEASIPATTPSPSSP) the composition is skewed to low complexity. A UBX domain is found at 205–284 (KEYDQCRIQV…GLVPSAVLIV (80 aa)).

The protein resides in the cytoplasm. Functionally, component of a complex required to couple deglycosylation and proteasome-mediated degradation of misfolded proteins in the endoplasmic reticulum that are retrotranslocated in the cytosol. Involved in ubiquitin-proteasome systems. This is UBX domain-containing protein 1 (ubxn1) from Xenopus tropicalis (Western clawed frog).